Reading from the N-terminus, the 367-residue chain is Inhibin alpha chain (367 aa).

Positions 1–20 are cleaved as a signal peptide; sequence MVPPLPLLLLLLLVPQGGHG. The propeptide occupies 21–63; that stretch reads CQGSELDREIVLAKVRALFLDALGPPAVTGEGGDPGVRRLPRR. Positions 64–233 are cleaved as a propeptide — inhibin alpha N-terminal region; it reads HALGGFARRG…PPSGGERTRR (170 aa). Asn-147 and Asn-269 each carry an N-linked (GlcNAc...) asparagine glycan. 3 cysteine pairs are disulfide-bonded: Cys-263–Cys-329, Cys-292–Cys-364, and Cys-296–Cys-366.

The protein belongs to the TGF-beta family. As to quaternary structure, dimeric, linked by one or more disulfide bonds. Activin B is a dimer of alpha and beta-B. Inhibin A is a dimer of alpha and beta-A. Inhibin B is a dimer of alpha and beta-B. Interacts with TGFBR3L; this interaction regulates female fertility. In terms of processing, proteolytic processing yields a number of bioactive forms, consisting either solely of the mature alpha chain, of the most N-terminal propeptide linked through a disulfide bond to the mature alpha chain, or of the entire proprotein.

Its subcellular location is the secreted. In terms of biological role, inhibins and activins inhibit and activate, respectively, the secretion of follitropin by the pituitary gland. Inhibins/activins are involved in regulating a number of diverse functions such as hypothalamic and pituitary hormone secretion, gonadal hormone secretion, germ cell development and maturation, erythroid differentiation, insulin secretion, nerve cell survival, embryonic axial development or bone growth, depending on their subunit composition. Inhibins appear to oppose the functions of activins. Inhibin A is a dimer of alpha/INHA and beta-A/INHBA that functions as a feedback regulator in the hypothalamic-pituitary-gonadal (HPG) axis. Inhibits the secretion of FSH from the anterior pituitary gland by acting on pituitary gonadotrope cells. Antagonizes activin A by binding to the proteoglycan, betaglycan, and forming a stable complex with and, thereby, sequestering type II activin receptors while excluding type I receptor. Its function is as follows. Inhibin B is a dimer of alpha and beta-B that plays a crucial role in the regulation of the reproductive system by inhibiting the secretion of follicle-stimulating hormone (FSH) from the anterior pituitary gland. Thereby, maintains reproductive homeostasis in both males and females. Acts as a more potent suppressor of FSH release than inhibin A. Functions as competitive receptor antagonist binding activin type II receptors with high affinity in the presence of the TGF-beta type III coreceptor/TGFBR3L. The sequence is that of Inhibin alpha chain (INHA) from Equus caballus (Horse).